A 69-amino-acid polypeptide reads, in one-letter code: Large ribosomal subunit protein bL31 (69 aa).

Residues Cys-17, Cys-19, Cys-37, and Cys-40 each coordinate Zn(2+).

The protein belongs to the bacterial ribosomal protein bL31 family. Type A subfamily. As to quaternary structure, part of the 50S ribosomal subunit. Zn(2+) serves as cofactor.

Binds the 23S rRNA. The polypeptide is Large ribosomal subunit protein bL31 (Caldicellulosiruptor saccharolyticus (strain ATCC 43494 / DSM 8903 / Tp8T 6331)).